The following is a 544-amino-acid chain: Chaperonin GroEL 1 (544 aa).

ATP is bound by residues 29–32 (TLGP), 86–90 (DGTTT), G413, 476–478 (NAA), and D492. Residues 523 to 544 (EPVKAPAGGGDMDGMGGMGGMM) form a disordered region. Positions 529–544 (AGGGDMDGMGGMGGMM) are enriched in gly residues.

It belongs to the chaperonin (HSP60) family. Forms a cylinder of 14 subunits composed of two heptameric rings stacked back-to-back. Interacts with the co-chaperonin GroES.

The protein resides in the cytoplasm. It catalyses the reaction ATP + H2O + a folded polypeptide = ADP + phosphate + an unfolded polypeptide.. Functionally, together with its co-chaperonin GroES, plays an essential role in assisting protein folding. The GroEL-GroES system forms a nano-cage that allows encapsulation of the non-native substrate proteins and provides a physical environment optimized to promote and accelerate protein folding. The chain is Chaperonin GroEL 1 from Cutibacterium acnes (strain DSM 16379 / KPA171202) (Propionibacterium acnes).